The sequence spans 638 residues: DNA repair protein rhp41 (638 aa).

It belongs to the XPC family.

It localises to the nucleus. In terms of biological role, has a role in the nucleotide excision repair (NER) pathway. Acts in both transcription-coupled repair (TCR) which removes damage from the transcribed strand of active genes and in global genome repair (GGR) which removes damage in untranscribed DNA. Involved in the repair of UV-induced damages where it is involved in the removal of cyclobutane pyrimidine dimers (CPDs). In Schizosaccharomyces pombe (strain 972 / ATCC 24843) (Fission yeast), this protein is DNA repair protein rhp41 (rhp41).